We begin with the raw amino-acid sequence, 89 residues long: Signal recognition particle 19 kDa protein (89 aa).

Belongs to the SRP19 family. In terms of assembly, part of the signal recognition particle protein translocation system, which is composed of SRP and FtsY. Archaeal SRP consists of a 7S RNA molecule of 300 nucleotides and two protein subunits: SRP54 and SRP19.

It is found in the cytoplasm. In terms of biological role, involved in targeting and insertion of nascent membrane proteins into the cytoplasmic membrane. Binds directly to 7S RNA and mediates binding of the 54 kDa subunit of the SRP. This is Signal recognition particle 19 kDa protein from Methanococcus maripaludis (strain DSM 14266 / JCM 13030 / NBRC 101832 / S2 / LL).